A 93-amino-acid polypeptide reads, in one-letter code: Mitochondrial import inner membrane translocase subunit Tim10-A (93 aa).

A Twin CX3C motif motif is present at residues 32-57; the sequence is CHKKCVPPHYKEAELSKGESVCLDRC. 2 cysteine pairs are disulfide-bonded: Cys32-Cys57 and Cys36-Cys53.

It belongs to the small Tim family. As to quaternary structure, heterohexamer; composed of 3 copies of TIMM9 and 3 copies of TIMM10/TIM10A, named soluble 70 kDa complex. The complex forms a 6-bladed alpha-propeller structure and associates with the TIMM22 component of the TIM22 complex. Interacts with multi-pass transmembrane proteins in transit.

It localises to the mitochondrion inner membrane. Mitochondrial intermembrane chaperone that participates in the import and insertion of multi-pass transmembrane proteins into the mitochondrial inner membrane. May also be required for the transfer of beta-barrel precursors from the TOM complex to the sorting and assembly machinery (SAM complex) of the outer membrane. Acts as a chaperone-like protein that protects the hydrophobic precursors from aggregation and guide them through the mitochondrial intermembrane space. This Xenopus laevis (African clawed frog) protein is Mitochondrial import inner membrane translocase subunit Tim10-A (timm10-a).